A 260-amino-acid chain; its full sequence is Proteasome subunit alpha type-1 (260 aa).

The tract at residues 240-260 (PRTTGGAAAAAAPGGAEPMQM) is disordered. Positions 244–260 (GGAAAAAAPGGAEPMQM) are enriched in low complexity.

It belongs to the peptidase T1A family. The 26S proteasome consists of a 20S proteasome core and two 19S regulatory subunits. The 20S proteasome core is composed of 28 subunits that are arranged in four stacked rings, resulting in a barrel-shaped structure. The two end rings are each formed by seven alpha subunits, and the two central rings are each formed by seven beta subunits. The catalytic chamber with the active sites is on the inside of the barrel.

It localises to the cytoplasm. It is found in the nucleus. Its function is as follows. The proteasome is a multicatalytic proteinase complex which is characterized by its ability to cleave peptides with Arg, Phe, Tyr, Leu, and Glu adjacent to the leaving group at neutral or slightly basic pH. The proteasome has an ATP-dependent proteolytic activity. This Caenorhabditis elegans protein is Proteasome subunit alpha type-1 (pas-6).